The primary structure comprises 515 residues: SWI/SNF global transcription activator complex subunit snf59 (515 aa).

The disordered stretch occupies residues Met1–Glu226. 5 stretches are compositionally biased toward basic and acidic residues: residues Thr7–Asn37, Glu50–Asn59, Glu73–Thr85, Glu94–Asn103, and Glu116–Asn125. Polar residues predominate over residues Lys126–Met136. Positions Glu140 to Glu226 are enriched in basic and acidic residues.

The protein belongs to the RSC7/SWP82 family. SWP82 subfamily. Component of the SWI/SNF global transcription activator complex composed of at least arp9, arp42, snf5, snf22, snf30, snf59, sol1, ssr1, ssr2, ssr3, ssr4 and tfg3.

Its subcellular location is the nucleus. Component of the SWI/SNF complex, an ATP-dependent chromatin remodeling complex, which is required for the positive and negative regulation of gene expression of a large number of genes. It changes chromatin structure by altering DNA-histone contacts within a nucleosome, leading eventually to a change in nucleosome position, thus facilitating or repressing binding of gene-specific transcription factors. In Schizosaccharomyces pombe (strain 972 / ATCC 24843) (Fission yeast), this protein is SWI/SNF global transcription activator complex subunit snf59 (snf59).